A 420-amino-acid chain; its full sequence is MVSRQEQFEQVQAVKKSINTASEEVKNQALLAMADHLVAATEEILAANALDMAAAKGKISDVMLDRLYLDADRIEAMARGIREVVALPDPIGEVLETSQLENGLVITKKRVAMGVIGIIYESRPNVTSDAAALTLKSGNAVVLRSGKDAYQTTHAIVTALKKGLETTTIHPNVIQLVEDTSHESSYAMMKAKGYLDLLIPRGGAGLINAVVENAIVPVIETGTGIVHVYVDKDADEDKALSIINNAKTSRPSVCNAMEVLLVHEDKAASILPRLDQMLVAERKEAGLEPIQFRLDSKASQFVSGQAAETQDFDTEFLDYVLAVKVVSSLEEAVAHIESHSTHHSDAIVTENAEAAAYFTDQVDSAAVYVNASTRFTDGGQFGLGCEMGISTQKLHARGPMGLKELTSYKYVVTGDGQIRE.

This sequence belongs to the gamma-glutamyl phosphate reductase family.

The protein resides in the cytoplasm. The enzyme catalyses L-glutamate 5-semialdehyde + phosphate + NADP(+) = L-glutamyl 5-phosphate + NADPH + H(+). Its pathway is amino-acid biosynthesis; L-proline biosynthesis; L-glutamate 5-semialdehyde from L-glutamate: step 2/2. Its function is as follows. Catalyzes the NADPH-dependent reduction of L-glutamate 5-phosphate into L-glutamate 5-semialdehyde and phosphate. The product spontaneously undergoes cyclization to form 1-pyrroline-5-carboxylate. In Streptococcus pneumoniae (strain Hungary19A-6), this protein is Gamma-glutamyl phosphate reductase.